The sequence spans 346 residues: Selenide, water dikinase (346 aa).

Sec-16 is an active-site residue. Position 16 (Sec-16) is a non-standard amino acid, selenocysteine. ATP contacts are provided by residues Lys-19 and 47 to 49 (TAD). Residue Asp-50 coordinates Mg(2+). Residues Asp-67, Asp-90, and 138-140 (GHS) contribute to the ATP site. A Mg(2+)-binding site is contributed by Asp-90. Residue Asp-226 coordinates Mg(2+).

It belongs to the selenophosphate synthase 1 family. Class I subfamily. In terms of assembly, homodimer. Mg(2+) is required as a cofactor.

The catalysed reaction is hydrogenselenide + ATP + H2O = selenophosphate + AMP + phosphate + 2 H(+). Its function is as follows. Synthesizes selenophosphate from selenide and ATP. This chain is Selenide, water dikinase, found in Haemophilus influenzae (strain ATCC 51907 / DSM 11121 / KW20 / Rd).